A 1722-amino-acid polypeptide reads, in one-letter code: Lymphocyte antigen 75 (1722 aa).

Positions 1 to 27 (MRTGWATPRRPAGLLMLLFWFFDLAEP) are cleaved as a signal peptide. Topologically, residues 28–1666 (SGRAANDPFT…VVCKVPLGPD (1639 aa)) are extracellular. A Ricin B-type lectin domain is found at 33–156 (NDPFTIVHGN…ESLCDQPYHE (124 aa)). N-linked (GlcNAc...) asparagine glycosylation occurs at asparagine 135. The 48-residue stretch at 164–211 (SYGRPCEFPFLIDGTWHHDCILDEDHSGPWCATTLNYEYDRKWGICLK) folds into the Fibronectin type-II domain. 4 disulfides stabilise this stretch: cysteine 169–cysteine 194, cysteine 183–cysteine 209, cysteine 247–cysteine 340, and cysteine 317–cysteine 332. The C-type lectin 1 domain occupies 225–341 (QFGSCYQFNT…CEAQLPYVCR (117 aa)). N-linked (GlcNAc...) asparagine glycosylation is found at asparagine 345 and asparagine 377. 4 consecutive C-type lectin domains span residues 368–486 (NNGF…YVCK), 493–625 (NDAS…ICKK), 652–778 (ASLS…IYLR), and 818–931 (IEGS…FICE). 2 cysteine pairs are disulfide-bonded: cysteine 389–cysteine 485 and cysteine 462–cysteine 477. Asparagine 529 is a glycosylation site (N-linked (GlcNAc...) asparagine). Cysteine 597 and cysteine 614 are oxidised to a cystine. 2 cysteine pairs are disulfide-bonded: cysteine 840–cysteine 930 and cysteine 904–cysteine 922. N-linked (GlcNAc...) asparagine glycosylation is found at asparagine 843 and asparagine 865. Tyrosine 933 bears the Phosphotyrosine mark. Residues asparagine 934, asparagine 1076, and asparagine 1103 are each glycosylated (N-linked (GlcNAc...) asparagine). Residues 958 to 1091 (FQNKCFLKIK…ERHFVSLCQK (134 aa)) enclose the C-type lectin 6 domain. Residues cysteine 1060 and cysteine 1080 are joined by a disulfide bond. A C-type lectin 7 domain is found at 1110–1222 (YLNNLYKIIP…DNQPGAICYY (113 aa)). Cysteines 1197 and 1211 form a disulfide. Asparagine 1225, asparagine 1320, and asparagine 1392 each carry an N-linked (GlcNAc...) asparagine glycan. In terms of domain architecture, C-type lectin 8 spans 1251 to 1374 (FQNCCYNFII…VIEEAVYFHQ (124 aa)). C-type lectin domains lie at 1401 to 1513 (YEDG…ICYK) and 1542 to 1661 (YKGH…VCKV). An intrachain disulfide couples cysteine 1488 to cysteine 1502. N-linked (GlcNAc...) asparagine glycans are attached at residues asparagine 1593 and asparagine 1626. An intrachain disulfide couples cysteine 1635 to cysteine 1650. Residues 1667–1691 (YTAIAIIVATLSILVLMGGLIWFLF) form a helical membrane-spanning segment. At 1692–1722 (QRHRLHLAGFSSVRYAQGVNEDEIMLPSFHD) the chain is on the cytoplasmic side. Serine 1703 and serine 1719 each carry phosphoserine.

N-glycosylated. Expressed in spleen, thymus, colon and peripheral blood lymphocytes. Detected in myeloid and B-lymphoid cell lines. Isoform 2 and isoform 3 are expressed in malignant Hodgkin lymphoma cells called Hodgkin and Reed-Sternberg (HRS) cells.

Its subcellular location is the membrane. Acts as an endocytic receptor to direct captured antigens from the extracellular space to a specialized antigen-processing compartment. Causes reduced proliferation of B-lymphocytes. This chain is Lymphocyte antigen 75 (LY75), found in Homo sapiens (Human).